Reading from the N-terminus, the 707-residue chain is Choline transporter-like protein 4 (707 aa).

The Cytoplasmic portion of the chain corresponds to 1–33 (MGGKQDQDKEAYGKPAKYDPSFRGPIRNRSCTD). A helical transmembrane segment spans residues 34–54 (IICCVLFFLFILGYIAVGILA). Residues 55-227 (WVYGDPKQVL…KIFEDFAQSW (173 aa)) lie on the Extracellular side of the membrane. N-linked (GlcNAc...) asparagine glycosylation is found at Asn-68, Asn-185, and Asn-196. Residues 228–248 (YWILIALGLALVLSLLFILLL) traverse the membrane as a helical segment. Topologically, residues 249–250 (RL) are cytoplasmic. A helical membrane pass occupies residues 251–271 (VAGPLVFVLIIGVLGVLAYGI). The Extracellular portion of the chain corresponds to 272–307 (YHCWEEYRVLRDKGASISQLGFTTNLSAYRNVQETW). Asn-296 is a glycosylation site (N-linked (GlcNAc...) asparagine). The chain crosses the membrane as a helical span at residues 308–328 (LAALIILAVLEGVLLLMLIFL). The Cytoplasmic segment spans residues 329 to 356 (RQRICIAIALLKEASRAVGYIMSTMFYP). The chain crosses the membrane as a helical span at residues 357–377 (LVTFALLLVCIAYWAIIALFL). Residues 378–452 (ATSGQPQYVF…AVLGLFWTIN (75 aa)) lie on the Extracellular side of the membrane. N-linked (GlcNAc...) asparagine glycosylation is found at Asn-391, Asn-403, and Asn-413. The chain crosses the membrane as a helical span at residues 453–473 (WVLALGQCVLAGAFASFYWAF). At 474-498 (HKPRDIPTFPLGSAFLRTLRYHTGS) the chain is on the cytoplasmic side. Residues 499 to 519 (LAFGALILTLVQIARVILEYI) traverse the membrane as a helical segment. Topologically, residues 520–557 (DHKLRGAQNPLTRCILCCFKCCLWCLEKFIKFLNRNAY) are extracellular. Residues 558-578 (IMIAIYGKNFCVSAKNAFMLL) traverse the membrane as a helical segment. The Cytoplasmic portion of the chain corresponds to 579–594 (MRNIVRVVVLDKVTDL). Residues 595 to 615 (LLFFGKLLVVGGVGVLSFFFF) form a helical membrane-spanning segment. The Extracellular segment spans residues 616–635 (TGRIPSLGKTFENPQLNYYW). A helical membrane pass occupies residues 636-656 (LPIMVSILGAYLIASGFFSVF). Residues 657 to 707 (GMCVDTLFLCFLEDLERNDGSADRPYYMSKSLLKILGKKNKGTPGDKKRKK) lie on the Cytoplasmic side of the membrane.

Belongs to the CTL (choline transporter-like) family. Post-translationally, N-glycosylated; N-glycosylation of Asn-68 and Asn-391 is required for a proper thiamine pyrophosphate uptake.

The protein localises to the membrane. The protein resides in the apical cell membrane. It carries out the reaction choline(out) + n H(+)(in) = choline(in) + n H(+)(out). It catalyses the reaction thiamine diphosphate(out) = thiamine diphosphate(in). Choline transporter that plays a role in the choline-acetylcholine system and is required to the efferent innervation of hair cells in the olivocochlear bundle for the maintenance of physiological function of outer hair cells and the protection of hair cells from acoustic injury. Also described as a thiamine pyrophosphate transporter in colon, may mediate the absorption of microbiota-generated thiamine pyrophosphate and contribute to host thiamine (vitamin B1) homeostasis. The chain is Choline transporter-like protein 4 from Bos taurus (Bovine).